Here is a 213-residue protein sequence, read N- to C-terminus: Nicolin-1 (213 aa).

In terms of assembly, part of the neuronal tubulin polyglutamylase complex which contains TPGS1, TPGS2, TTLL1, LRRC49 and NICN1. In terms of tissue distribution, high expression level is found in brain, testis, liver and kidney. Weak expression in spleen, leukocytes, small intestine and colon.

Its subcellular location is the nucleus. The chain is Nicolin-1 (NICN1) from Homo sapiens (Human).